A 288-amino-acid polypeptide reads, in one-letter code: Beta-lactamase CARB-3 (288 aa).

The first 17 residues, Met1–Ala17, serve as a signal peptide directing secretion. Ser65 serves as the catalytic Acyl-ester intermediate. Cys72 and Cys118 are oxidised to a cystine. Arg229–Gly231 is a binding site for substrate.

This sequence belongs to the class-A beta-lactamase family.

The enzyme catalyses a beta-lactam + H2O = a substituted beta-amino acid. Functionally, hydrolyzes both carbenicillin and oxacillin. This chain is Beta-lactamase CARB-3 (carB3), found in Pseudomonas aeruginosa.